Reading from the N-terminus, the 61-residue chain is UPF0434 protein Pmen_1615 (61 aa).

The protein belongs to the UPF0434 family.

The sequence is that of UPF0434 protein Pmen_1615 from Ectopseudomonas mendocina (strain ymp) (Pseudomonas mendocina).